The following is a 434-amino-acid chain: GTPase Obg (434 aa).

The Obg domain occupies 1–158; it reads MFLDTAKIKV…RELQLELKIL (158 aa). One can recognise an OBG-type G domain in the interval 159 to 336; that stretch reads ADVGLVGFPS…LLDATAELLD (178 aa). Residues 165-172, 190-194, 212-215, 282-285, and 317-319 contribute to the GTP site; these read GFPSVGKS, FTTIV, DLPG, NKMD, and SGL. The Mg(2+) site is built by S172 and T192. The OCT domain occupies 356–434; it reads GFDEEEKAFE…IGKFEFEFVD (79 aa).

This sequence belongs to the TRAFAC class OBG-HflX-like GTPase superfamily. OBG GTPase family. Monomer. Mg(2+) serves as cofactor.

It is found in the cytoplasm. Its function is as follows. An essential GTPase which binds GTP, GDP and possibly (p)ppGpp with moderate affinity, with high nucleotide exchange rates and a fairly low GTP hydrolysis rate. Plays a role in control of the cell cycle, stress response, ribosome biogenesis and in those bacteria that undergo differentiation, in morphogenesis control. In Streptococcus pneumoniae (strain Hungary19A-6), this protein is GTPase Obg.